The sequence spans 513 residues: Xylose import ATP-binding protein XylG (513 aa).

2 consecutive ABC transporter domains span residues 5 to 242 and 259 to 505; these read LEMK…VGRE and LRIE…LRSE. 37 to 44 is a binding site for ATP; sequence GENGSGKS.

It belongs to the ABC transporter superfamily. Xylose importer (TC 3.A.1.2.4) family. In terms of assembly, the complex is composed of two ATP-binding proteins (XylG), two transmembrane proteins (XylH) and a solute-binding protein (XylF).

Its subcellular location is the cell inner membrane. It carries out the reaction D-xylose(out) + ATP + H2O = D-xylose(in) + ADP + phosphate + H(+). In terms of biological role, part of the ABC transporter complex XylFGH involved in xylose import. Responsible for energy coupling to the transport system. The polypeptide is Xylose import ATP-binding protein XylG (Shigella boydii serotype 4 (strain Sb227)).